The primary structure comprises 502 residues: Archaemetzincin-1 (502 aa).

H262 contributes to the Zn(2+) binding site. The active-site Proton acceptor is the E263. H266, C273, C278, C297, and C300 together coordinate Zn(2+). A disordered region spans residues 336–383 (GEPSVSEDTLPFSADSGMGCESDTEPVTSPSEPVTPDGWSHPFPDGPE).

It belongs to the peptidase M54 family. Zn(2+) is required as a cofactor.

Its function is as follows. Probable zinc metalloprotease. This Mus musculus (Mouse) protein is Archaemetzincin-1 (Amz1).